A 403-amino-acid chain; its full sequence is SEC14-like protein 2 (403 aa).

Lys51 carries the N6-succinyllysine modification. Positions 76 to 249 (PPEVIQQYLS…EYGGTMTDPD (174 aa)) constitute a CRAL-TRIO domain. N6-succinyllysine is present on residues Lys253 and Lys257. Residues 275 to 383 (KQQYEHSVQI…AKKVNFTVEV (109 aa)) enclose the GOLD domain. Residue Lys393 is modified to N6-succinyllysine.

In terms of assembly, monomer. Widely expressed. Strong expression in liver, brain and prostate.

The protein resides in the cytoplasm. It localises to the nucleus. Functionally, carrier protein. Binds to some hydrophobic molecules and promotes their transfer between the different cellular sites. Binds with high affinity to alpha-tocopherol. Also binds with a weaker affinity to other tocopherols and to tocotrienols. May have a transcriptional activatory activity via its association with alpha-tocopherol. Probably recognizes and binds some squalene structure, suggesting that it may regulate cholesterol biosynthesis by increasing the transfer of squalene to a metabolic active pool in the cell. The chain is SEC14-like protein 2 (SEC14L2) from Homo sapiens (Human).